A 1248-amino-acid polypeptide reads, in one-letter code: Structural maintenance of chromosomes protein 1B (1248 aa).

32–39 provides a ligand contact to ATP; it reads GPNGSGKS. Residues 163–502 adopt a coiled-coil conformation; sequence EFIGEYEAKK…EGKRQQKRAE (340 aa). The region spanning 514–629 is the SMC hinge domain; that stretch reads SVFGRLLDLC…ETVEEARHIA (116 aa). N6-acetyllysine occurs at positions 648, 713, and 1032. A coiled-coil region spans residues 666-912; that stretch reads WDEKELHNLR…REVGKLQKEV (247 aa). The segment covering 1219–1228 has biased composition (basic and acidic residues); the sequence is PDTEDQEGSR. The segment at 1219–1248 is disordered; it reads PDTEDQEGSRSHRKPRVPRVSMSPKSPQSR.

Belongs to the SMC family. SMC1 subfamily. As to quaternary structure, forms a heterodimer with SMC3. Component of a meiosis-specific cohesin complex, probably composed of the SMC1B and SMC3 heterodimer attached via their SMC hinge domain, RAD21 (or its meiosis-specific related protein REC8), which link them, and STAG3, which interacts with RAD21 or REC8. The cohesin complex interacts with the cohesin loading complex subunits NIPBL/Scc2 (via HEAT repeats) and MAU2/Scc4. NIPBL directly contacts all members of the complex, RAD21, SMC1A/B, SMC3 and STAG1. As to expression, spermatocytes (at protein level). Testis and ovary specific. Not expressed in somatic cells.

It localises to the nucleus. The protein localises to the chromosome. It is found in the centromere. Functionally, meiosis-specific component of cohesin complex. Required for the maintenance of meiotic cohesion, but not, or only to a minor extent, for its establishment. Contributes to axial element (AE) formation and the organization of chromatin loops along the AE. Plays a key role in synapsis, recombination and chromosome movements. The cohesin complex is required for the cohesion of sister chromatids after DNA replication. The cohesin complex apparently forms a large proteinaceous ring within which sister chromatids can be trapped. At anaphase, the complex is cleaved and dissociates from chromatin, allowing sister chromatids to segregate. The meiosis-specific cohesin complex probably replaces mitosis specific cohesin complex when it dissociates from chromatin during prophase I. This Mus musculus (Mouse) protein is Structural maintenance of chromosomes protein 1B (Smc1b).